Here is a 141-residue protein sequence, read N- to C-terminus: Nucleoside diphosphate kinase (141 aa).

Lys10, Phe58, Arg86, Thr92, Arg103, and Asn113 together coordinate ATP. Catalysis depends on His116, which acts as the Pros-phosphohistidine intermediate.

This sequence belongs to the NDK family. In terms of assembly, homotetramer. Mg(2+) serves as cofactor.

Its subcellular location is the cytoplasm. The catalysed reaction is a 2'-deoxyribonucleoside 5'-diphosphate + ATP = a 2'-deoxyribonucleoside 5'-triphosphate + ADP. It carries out the reaction a ribonucleoside 5'-diphosphate + ATP = a ribonucleoside 5'-triphosphate + ADP. In terms of biological role, major role in the synthesis of nucleoside triphosphates other than ATP. The ATP gamma phosphate is transferred to the NDP beta phosphate via a ping-pong mechanism, using a phosphorylated active-site intermediate. The protein is Nucleoside diphosphate kinase of Hydrogenovibrio crunogenus (strain DSM 25203 / XCL-2) (Thiomicrospira crunogena).